The primary structure comprises 155 residues: Endoribonuclease YbeY (155 aa).

Residues histidine 115, histidine 119, and histidine 125 each contribute to the Zn(2+) site.

The protein belongs to the endoribonuclease YbeY family. Zn(2+) serves as cofactor.

The protein localises to the cytoplasm. Its function is as follows. Single strand-specific metallo-endoribonuclease involved in late-stage 70S ribosome quality control and in maturation of the 3' terminus of the 16S rRNA. The sequence is that of Endoribonuclease YbeY from Polynucleobacter asymbioticus (strain DSM 18221 / CIP 109841 / QLW-P1DMWA-1) (Polynucleobacter necessarius subsp. asymbioticus).